Consider the following 298-residue polypeptide: Glutamate/glycine mitochondrial carrier ymc1 (298 aa).

Solcar repeat units follow at residues 14-98 (TKDF…CKRF), 106-193 (VTMP…LVKN), and 206-294 (TPGW…VSQH). Helical transmembrane passes span 17–37 (FLAGVSGGVAQVLVGQPFDCV), 67–87 (LAAFYKGTVLPLLGIGFCVSI), 112–132 (YVSGAISGLANSFLVGPVEHV), 172–192 (TAAREAHGLGMYFLAYEALVK), 212–232 (CVFGAGAGYAMWLAAYPFDIV), and 266–287 (FYRGFVPVLVRAAPANAVTFYV).

The protein belongs to the mitochondrial carrier (TC 2.A.29) family.

Its subcellular location is the mitochondrion inner membrane. In terms of biological role, acts as a glutamate and glycine mitochondrial transmembrane transporter. The protein is Glutamate/glycine mitochondrial carrier ymc1 (ymc1) of Schizosaccharomyces pombe (strain 972 / ATCC 24843) (Fission yeast).